The following is a 600-amino-acid chain: Elongation factor 4 (600 aa).

The tr-type G domain occupies 4–187 (KYIRNFSIVA…AIIEQIPPPL (184 aa)). Residues 16–21 (DHGKST) and 134–137 (NKID) each bind GTP.

The protein belongs to the TRAFAC class translation factor GTPase superfamily. Classic translation factor GTPase family. LepA subfamily.

Its subcellular location is the cell membrane. It carries out the reaction GTP + H2O = GDP + phosphate + H(+). Functionally, required for accurate and efficient protein synthesis under certain stress conditions. May act as a fidelity factor of the translation reaction, by catalyzing a one-codon backward translocation of tRNAs on improperly translocated ribosomes. Back-translocation proceeds from a post-translocation (POST) complex to a pre-translocation (PRE) complex, thus giving elongation factor G a second chance to translocate the tRNAs correctly. Binds to ribosomes in a GTP-dependent manner. This Malacoplasma penetrans (strain HF-2) (Mycoplasma penetrans) protein is Elongation factor 4.